Reading from the N-terminus, the 144-residue chain is 3-dehydroquinate dehydratase (144 aa).

The active-site Proton acceptor is the tyrosine 22. Substrate is bound by residues asparagine 73, histidine 79, and aspartate 86. The active-site Proton donor is the histidine 99. Substrate contacts are provided by residues 100-101 (LS) and arginine 110.

Belongs to the type-II 3-dehydroquinase family. Homododecamer.

It catalyses the reaction 3-dehydroquinate = 3-dehydroshikimate + H2O. The protein operates within metabolic intermediate biosynthesis; chorismate biosynthesis; chorismate from D-erythrose 4-phosphate and phosphoenolpyruvate: step 3/7. In terms of biological role, catalyzes a trans-dehydration via an enolate intermediate. The sequence is that of 3-dehydroquinate dehydratase from Trichlorobacter lovleyi (strain ATCC BAA-1151 / DSM 17278 / SZ) (Geobacter lovleyi).